The chain runs to 190 residues: Elongation factor P-like protein (190 aa).

The protein belongs to the elongation factor P family.

This is Elongation factor P-like protein from Psychromonas ingrahamii (strain DSM 17664 / CCUG 51855 / 37).